Reading from the N-terminus, the 394-residue chain is Galactose-3-O-sulfotransferase 2 (394 aa).

Over 1-8 (MWGSQHRS) the chain is Cytoplasmic. The chain crosses the membrane as a helical; Signal-anchor for type II membrane protein span at residues 9-29 (FQVALWFLVLAVFLLVGFLHV). Residues 30–394 (DFRLLIPDKV…TPKDIPFLKK (365 aa)) lie on the Lumenal side of the membrane. 4 N-linked (GlcNAc...) asparagine glycosylation sites follow: Asn72, Asn176, Asn284, and Asn326.

This sequence belongs to the galactose-3-O-sulfotransferase family.

Its subcellular location is the golgi apparatus. The protein localises to the golgi stack membrane. Its pathway is protein modification; carbohydrate sulfation. Its activity is regulated as follows. Strongly inhibited by Cu(2+) and Zn(2+). Its function is as follows. Transfers a sulfate group to the hydroxyl group at C3 of non-reducing beta-galactosyl residues. Acts both on type 1 (Gal-beta-1,3-GlcNAc) and type 2 (Gal-beta-1,4-GlcNAc) chains with similar efficiency. The protein is Galactose-3-O-sulfotransferase 2 (Gal3st2) of Mus musculus (Mouse).